The chain runs to 382 residues: GDP-mannose-dependent alpha-(1-6)-phosphatidylinositol monomannoside mannosyltransferase (382 aa).

The GDP-alpha-D-mannose site is built by Arg200, Lys205, Ile257, and Glu294.

Belongs to the glycosyltransferase group 1 family. Glycosyltransferase 4 subfamily.

The enzyme catalyses a 1,2-diacyl-sn-glycero-3-phospho-[alpha-D-mannopyranosyl-(1&lt;-&gt;6)-D-myo-inositol] + GDP-alpha-D-mannose = a 2,6-O-bis(alpha-D-mannopyranosyl)-1-phosphatidyl-1D-myo-inositol + GDP + H(+). It catalyses the reaction a 1,2-diacyl-sn-glycero-3-phospho-[alpha-D-6-acyl-mannopyranosyl-(1&lt;-&gt;6)-D-myo-inositol] + GDP-alpha-D-mannose = a 2-O-(alpha-D-mannosyl)-6-O-(6-O-acyl-alpha-D-mannosyl)-1-phosphatidyl-1D-myo-inositol + GDP + H(+). It functions in the pathway phospholipid metabolism; phosphatidylinositol metabolism. Its function is as follows. Involved in the biosynthesis of phosphatidyl-myo-inositol mannosides (PIM) which are early precursors in the biosynthesis of lipomannans (LM) and lipoarabinomannans (LAM). Catalyzes the addition of a mannosyl residue from GDP-D-mannose (GDP-Man) to the position 6 of a phosphatidyl-myo-inositol bearing an alpha-1,2-linked mannose residue (PIM1) to generate phosphatidyl-myo-inositol bearing alpha-1,2- and alpha-1,6-linked mannose residues (Ac1PIM2). PimB also catalyzes the addition of a mannosyl residue from GDP-Man to the position 6 of phosphatidyl-myo-inositol bearing an acylated alpha-1,2-linked mannose residue (Ac1PIM1) to generate monoacylated phosphatidyl-myo-inositol bearing alpha-1,2- and alpha-1,6-linked mannose residues (Ac1PIM2). The addition of the second mannosyl residue by PimB preferentially occurs before the acylation of the mannosyl residue transferred by PimA. Also able to transfer a mannosyl residue from GDP-Man to the position 6 of a phosphatidyl-myo-inositol (PI), but this reaction is very slow. In Mycolicibacterium smegmatis (strain ATCC 700084 / mc(2)155) (Mycobacterium smegmatis), this protein is GDP-mannose-dependent alpha-(1-6)-phosphatidylinositol monomannoside mannosyltransferase.